Consider the following 284-residue polypeptide: Malonyl-[acyl-carrier protein] O-methyltransferase (284 aa).

This sequence belongs to the methyltransferase superfamily.

It catalyses the reaction malonyl-[ACP] + S-adenosyl-L-methionine = malonyl-[ACP] methyl ester + S-adenosyl-L-homocysteine. Its pathway is cofactor biosynthesis; biotin biosynthesis. In terms of biological role, converts the free carboxyl group of a malonyl-thioester to its methyl ester by transfer of a methyl group from S-adenosyl-L-methionine (SAM). It allows to synthesize pimeloyl-ACP via the fatty acid synthetic pathway. In Legionella pneumophila subsp. pneumophila (strain Philadelphia 1 / ATCC 33152 / DSM 7513), this protein is Malonyl-[acyl-carrier protein] O-methyltransferase.